Reading from the N-terminus, the 343-residue chain is Phenylalanine--tRNA ligase alpha subunit (343 aa).

Residue E256 coordinates Mg(2+).

It belongs to the class-II aminoacyl-tRNA synthetase family. Phe-tRNA synthetase alpha subunit type 1 subfamily. In terms of assembly, tetramer of two alpha and two beta subunits. Requires Mg(2+) as cofactor.

It localises to the cytoplasm. It catalyses the reaction tRNA(Phe) + L-phenylalanine + ATP = L-phenylalanyl-tRNA(Phe) + AMP + diphosphate + H(+). This is Phenylalanine--tRNA ligase alpha subunit from Aster yellows witches'-broom phytoplasma (strain AYWB).